The primary structure comprises 322 residues: Alanine dehydrogenase (322 aa).

Catalysis depends on lysine 65, which acts as the Proton donor/acceptor. NAD(+) contacts are provided by residues arginine 108, 135–136 (TQ), 157–159 (DVR), 217–219 (GAD), lysine 223, and serine 290.

It belongs to the ornithine cyclodeaminase/mu-crystallin family. Archaeal alanine dehydrogenase subfamily. In terms of assembly, homodimer.

It catalyses the reaction L-alanine + NAD(+) + H2O = pyruvate + NH4(+) + NADH + H(+). In terms of biological role, catalyzes the NAD(+)-dependent oxidative deamination of L-alanine to pyruvate, and the reverse reaction, the reductive amination of pyruvate. Its physiological role is not known. Cannot use NADP(+) instead of NAD(+) as a cosubstrate. In the deamination direction, can also efficiently use L-2-aminobutyrate as substrate. In the reductive amination direction, also exhibits high activity with 2-oxobutyrate and oxaloacetate as substrate. In contrast to bacterial homologs, does not exhibit any ornithine cyclodeaminase activity. The polypeptide is Alanine dehydrogenase (Archaeoglobus fulgidus (strain ATCC 49558 / DSM 4304 / JCM 9628 / NBRC 100126 / VC-16)).